Consider the following 398-residue polypeptide: MTEQKGRYLFTSESVTEGHPDKMADQISDAVLDAILALDPRARVACETLLTTGLVVVTGEITTHAYVDIPNLVRDVVRDIGYTRAKYGFDGSTCGVMTAIDPQSPDIAQGVDVAIEVRGEVNEKELEIGAGDQGMMFGFACDETPELMPLPISLAHRLARRLAQVRKNGTLPYLRPDGKTQVTIEYEDGRPKRIDTIVISAQHDPDTTQEQIRKDVIDYVILDVVDRNLIDDRTRYFINPTGRFVVGGPQGDTGLTGRKIIVDTYGGYARHGGGAFSGKDPTKVDRSGAYAARWVAKNIVAAGLARKCEVQVAYAIGVAHPVSILVTTFGTGKLPDERLAQLVRETFDLRPGAIIRDLDLRRPIYRQVAAYGHFGRPDLDLPWERTDKVDLLREKAGI.

An ATP-binding site is contributed by His19. Residue Asp21 participates in Mg(2+) binding. A K(+)-binding site is contributed by Glu47. 2 residues coordinate L-methionine: Glu60 and Gln103. A flexible loop region spans residues 103–113 (QSPDIAQGVDV). Residues 177-179 (DGK), 243-244 (RF), Asp252, 258-259 (RK), Ala275, and Lys279 contribute to the ATP site. Asp252 lines the L-methionine pocket. Lys283 lines the L-methionine pocket.

It belongs to the AdoMet synthase family. Homotetramer; dimer of dimers. Requires Mg(2+) as cofactor. The cofactor is K(+).

The protein localises to the cytoplasm. The catalysed reaction is L-methionine + ATP + H2O = S-adenosyl-L-methionine + phosphate + diphosphate. It functions in the pathway amino-acid biosynthesis; S-adenosyl-L-methionine biosynthesis; S-adenosyl-L-methionine from L-methionine: step 1/1. Its function is as follows. Catalyzes the formation of S-adenosylmethionine (AdoMet) from methionine and ATP. The overall synthetic reaction is composed of two sequential steps, AdoMet formation and the subsequent tripolyphosphate hydrolysis which occurs prior to release of AdoMet from the enzyme. The sequence is that of S-adenosylmethionine synthase from Symbiobacterium thermophilum (strain DSM 24528 / JCM 14929 / IAM 14863 / T).